The sequence spans 291 residues: Protease HtpX homolog (291 aa).

Helical transmembrane passes span Ile11–Ala31 and Phe34–Gln54. Residue His140 participates in Zn(2+) binding. The active site involves Glu141. A Zn(2+)-binding site is contributed by His144. Helical transmembrane passes span Ile155 to Ile175 and Ala186 to Val206. Glu215 is a binding site for Zn(2+).

Belongs to the peptidase M48B family. The cofactor is Zn(2+).

It localises to the cell membrane. This chain is Protease HtpX homolog, found in Tropheryma whipplei (strain TW08/27) (Whipple's bacillus).